A 56-amino-acid chain; its full sequence is Large ribosomal subunit protein bL32 (56 aa).

Over residues 1–16 (MAVQKSKKSRSMRGMR) the composition is skewed to basic residues. Residues 1–22 (MAVQKSKKSRSMRGMRRSHDAL) form a disordered region.

The protein belongs to the bacterial ribosomal protein bL32 family.

The chain is Large ribosomal subunit protein bL32 from Aliivibrio salmonicida (strain LFI1238) (Vibrio salmonicida (strain LFI1238)).